The following is a 312-amino-acid chain: Ribosomal protein L11 methyltransferase (312 aa).

S-adenosyl-L-methionine contacts are provided by threonine 163, glycine 184, aspartate 206, and asparagine 248.

This sequence belongs to the methyltransferase superfamily. PrmA family.

The protein resides in the cytoplasm. It carries out the reaction L-lysyl-[protein] + 3 S-adenosyl-L-methionine = N(6),N(6),N(6)-trimethyl-L-lysyl-[protein] + 3 S-adenosyl-L-homocysteine + 3 H(+). In terms of biological role, methylates ribosomal protein L11. This Clostridium botulinum (strain Okra / Type B1) protein is Ribosomal protein L11 methyltransferase.